The chain runs to 148 residues: 3-dehydroquinate dehydratase (148 aa).

Residue tyrosine 26 is the Proton acceptor of the active site. The substrate site is built by asparagine 77, histidine 83, and aspartate 90. The active-site Proton donor is the histidine 103. Substrate is bound by residues 104-105 (LS) and arginine 114.

Belongs to the type-II 3-dehydroquinase family. As to quaternary structure, homododecamer.

The catalysed reaction is 3-dehydroquinate = 3-dehydroshikimate + H2O. It functions in the pathway metabolic intermediate biosynthesis; chorismate biosynthesis; chorismate from D-erythrose 4-phosphate and phosphoenolpyruvate: step 3/7. Functionally, catalyzes a trans-dehydration via an enolate intermediate. The chain is 3-dehydroquinate dehydratase (aroQ) from Pasteurella multocida (strain Pm70).